Here is a 506-residue protein sequence, read N- to C-terminus: GMP synthase [glutamine-hydrolyzing] (506 aa).

The Glutamine amidotransferase type-1 domain maps to Lys-4–Asp-192. Cys-79 acts as the Nucleophile in catalysis. Residues His-167 and Glu-169 contribute to the active site. Residues Trp-193 to Arg-381 enclose the GMPS ATP-PPase domain. Ser-220–Ser-226 is an ATP binding site.

In terms of assembly, homodimer.

It catalyses the reaction XMP + L-glutamine + ATP + H2O = GMP + L-glutamate + AMP + diphosphate + 2 H(+). It participates in purine metabolism; GMP biosynthesis; GMP from XMP (L-Gln route): step 1/1. Its function is as follows. Catalyzes the synthesis of GMP from XMP. This Porphyromonas gingivalis (strain ATCC BAA-308 / W83) protein is GMP synthase [glutamine-hydrolyzing].